A 579-amino-acid polypeptide reads, in one-letter code: Putative laccase-9 (579 aa).

A signal peptide spans 1 to 27; the sequence is MGTAKLPALLWLLAGVVLALAVNPAHG. 2 consecutive Plastocyanin-like domains span residues 36-152 and 162-319; these read FITE…PKRG and KEIP…YTDS. 2 N-linked (GlcNAc...) asparagine glycosylation sites follow: Asn41 and Asn82. The Cu cation site is built by His86 and His88. Asn114 carries N-linked (GlcNAc...) asparagine glycosylation. 2 residues coordinate Cu cation: His131 and His133. Asn307, Asn405, and Asn446 each carry an N-linked (GlcNAc...) asparagine glycan. Residues 436 to 563 form the Plastocyanin-like 3 domain; the sequence is PTAFVDPPVN…DTVFIVKDGK (128 aa). Cu cation-binding residues include His480, His483, and His485. Asn496 carries an N-linked (GlcNAc...) asparagine glycan. Residues His542, Cys543, His544, His548, and Met553 each contribute to the Cu cation site.

The protein belongs to the multicopper oxidase family. Cu cation is required as a cofactor.

It localises to the secreted. The protein localises to the extracellular space. It is found in the apoplast. It carries out the reaction 4 hydroquinone + O2 = 4 benzosemiquinone + 2 H2O. In terms of biological role, lignin degradation and detoxification of lignin-derived products. This Oryza sativa subsp. japonica (Rice) protein is Putative laccase-9 (LAC9).